The sequence spans 127 residues: Major sperm protein 55/57 (127 aa).

Position 2 is an N-acetylalanine (A2). The MSP domain occupies 9-126 (DIQTQPGTKI…RRKNLPIEYN (118 aa)).

Sperm.

It localises to the cell projection. Its subcellular location is the pseudopodium. The protein resides in the cytoplasm. The protein localises to the cytoskeleton. In terms of biological role, central component in molecular interactions underlying sperm crawling. Forms an extensive filament system that extends from sperm villipoda, along the leading edge of the pseudopod. This is Major sperm protein 55/57 (msp-55) from Caenorhabditis elegans.